A 136-amino-acid chain; its full sequence is MNSQIKNKAVYWGTGRRKTSVARVRLIPGNGLIKINGRAGDDYLNFNPLHLNSIKAPLQTLGLENSYDMYVNVFGGGLTGQADAIKQGAARALCELSPDNRKPLKTEGHLSRDPRAKERRKYGLKKARKAPQFSKR.

Positions 97-136 are disordered; that stretch reads SPDNRKPLKTEGHLSRDPRAKERRKYGLKKARKAPQFSKR. Positions 98–116 are enriched in basic and acidic residues; sequence PDNRKPLKTEGHLSRDPRA. A compositionally biased stretch (basic residues) spans 117–136; it reads KERRKYGLKKARKAPQFSKR.

Belongs to the universal ribosomal protein uS9 family.

This is Small ribosomal subunit protein uS9 from Prochlorococcus marinus (strain MIT 9301).